The chain runs to 82 residues: Myrmicitoxin(1)-Pm3a (82 aa).

The first 23 residues, 1–23 (MEIPKLLYIAVIAIGLSGSLTCA), serve as a signal peptide directing secretion. A propeptide spanning residues 24 to 59 (TPLANPLADPEAEAEAKATAEATAEAIAEALAEPEP) is cleaved from the precursor. Leucine 81 is subject to Leucine amide.

Belongs to the formicidae venom clade 1 family. In terms of tissue distribution, expressed by the venom gland.

It is found in the secreted. In terms of biological role, toxin that causes a slowly developing temporary paralysis when intrathoracically injected into insects (blowflies). Does not cause spontaneous nocifensive behaviors by intraplantar injection in mice. The polypeptide is Myrmicitoxin(1)-Pm3a (Pogonomyrmex maricopa (Maricopa harvester ant)).